The chain runs to 666 residues: MAQGAVIHVAPEQPTHAVCVVGTATPLDVRGSAPKGYTTFGITASPGVIVDVIHGPPVKKSTMGASKWPLDPELEVTLQVKAASSRTDDEKVRVSYYGPKTSPVQALIYITGVELSLSADVTRTGRVKPAQAGKDQSTWTWGPGGRGAILLVNCDKEDPQASGMDFEDDKILDNKDLQDMSPMTLSTKTPKDFFEKYQLVLEVPKAKMNRVRVFRATRGKLPSRYKVALGPQQFSYCLELPGGQHSTDFYVEGLAFPDADFKGLIPLTISLLDKSNPELPEALVFQDSVTFRVAPWIMTPNTQPPQEVYVCRVSDNEDFLKSLATLTKKAKCKLTVCPEEENIDDQWMQDEMEIGYIQAPHKTLPVVFDSPRDRGLKDFPVKRVMGPNFGYVTRKLYMSELTGLDAFGNLEVSPPVTVRGKEYPLGRILIGNSGYSSSESRDMHQALQDFLSAQQVQAPVRLFSDWLFVGHVDEFLSFVPARDKQGFRLLLSSPRACYQLFQELQSQGHGEATLFEGLKRKRQTINEILSNKKLRDQNAYVESCIDWNRAVLKRELGLAEGDIIDIPQLFKLAGNSRGNSKAQAFFPNMVNMLVLGKYLGIPKPFGPIIDGHCCLEEEVRSHLEPLGLHCTFINDFYTYHVYNGEVHCGTNVRRKPFTFKWWHMVP.

Ca(2+) contacts are provided by Asn153, Asp155, Asp165, Asp168, Asp176, and Asp179. A citrulline mark is found at Arg212 and Arg218. Residue Gln349 coordinates Ca(2+). Asp350 is a catalytic residue. The Ca(2+) site is built by Glu351, Glu353, Asp369, and Ser370. Citrulline is present on residues Arg372, Arg374, and Arg383. Residue Arg374 participates in substrate binding. Phe407, Leu410, and Glu411 together coordinate Ca(2+). Active-site residues include His471, Asp473, and Cys648.

The protein belongs to the protein arginine deiminase family. Requires Ca(2+) as cofactor. Autocitrullination at Arg-372 and Arg-374 inactivates the enzyme. Expressed in pluripotent embryonic stem and induced pluripotent stem cells but not multipotent neural stem cells.

Its subcellular location is the cytoplasm. The protein localises to the nucleus. The protein resides in the cytoplasmic granule. It carries out the reaction L-arginyl-[protein] + H2O = L-citrullyl-[protein] + NH4(+). With respect to regulation, strongly Inhibited by F-amidine and N-alpha-benzoyl-N5-(2-chloro-1-iminoethyl)-L-ornithine amide (Cl-amidine). These inhibitors are however not specific to PADI4 and also inhibit other members of the family. Functionally, catalyzes the citrullination/deimination of arginine residues of proteins such as histones, thereby playing a key role in histone code and regulation of stem cell maintenance. Citrullinates histone H1 at 'Arg-54' (to form H1R54ci), histone H3 at 'Arg-2', 'Arg-8', 'Arg-17' and/or 'Arg-26' (to form H3R2ci, H3R8ci, H3R17ci, H3R26ci, respectively) and histone H4 at 'Arg-3' (to form H4R3ci). Acts as a key regulator of stem cell maintenance by mediating citrullination of histone H1: citrullination of 'Arg-54' of histone H1 (H1R54ci) results in H1 displacement from chromatin and global chromatin decondensation, thereby promoting pluripotency and stem cell maintenance. Promotes profound chromatin decondensation during the innate immune response to infection in neutrophils by mediating formation of H1R54ci. Required for the formation of neutrophil extracellular traps (NETs); NETs are mainly composed of DNA fibers and are released by neutrophils to bind pathogens during inflammation. Citrullination of histone H3 prevents their methylation by CARM1 and HRMT1L2/PRMT1 and represses transcription. Citrullinates EP300/P300 at 'Arg-2142', which favors its interaction with NCOA2/GRIP1. The polypeptide is Protein-arginine deiminase type-4 (Padi4) (Mus musculus (Mouse)).